The following is a 243-amino-acid chain: tRNA (guanine-N(1)-)-methyltransferase (243 aa).

Residues Gly108 and 127–132 (LGDFVL) contribute to the S-adenosyl-L-methionine site.

This sequence belongs to the RNA methyltransferase TrmD family. In terms of assembly, homodimer.

It localises to the cytoplasm. It carries out the reaction guanosine(37) in tRNA + S-adenosyl-L-methionine = N(1)-methylguanosine(37) in tRNA + S-adenosyl-L-homocysteine + H(+). Its function is as follows. Specifically methylates guanosine-37 in various tRNAs. The chain is tRNA (guanine-N(1)-)-methyltransferase from Streptococcus equi subsp. zooepidemicus (strain MGCS10565).